Reading from the N-terminus, the 158-residue chain is MRCPYCGSEDTQVKDSRPAEDNTSIRRRRICPDCGGRFTTFERVQLRELMVIKKTGRKVPFDRDKLVRSFEVALRKRPVERDRIERAVSGIVRRLESSGETEISSEQIGLQVLEAMKSLDDVGFVRYASVYRDFSLAEDFEKVISEINAKIARDPLDR.

Residues 1 to 22 are disordered; the sequence is MRCPYCGSEDTQVKDSRPAEDN. A zinc finger lies at 3–34; it reads CPYCGSEDTQVKDSRPAEDNTSIRRRRICPDC. Over residues 11–22 the composition is skewed to basic and acidic residues; sequence TQVKDSRPAEDN. Residues 49 to 139 enclose the ATP-cone domain; that stretch reads LMVIKKTGRK…VYRDFSLAED (91 aa).

It belongs to the NrdR family. Requires Zn(2+) as cofactor.

Negatively regulates transcription of bacterial ribonucleotide reductase nrd genes and operons by binding to NrdR-boxes. The chain is Transcriptional repressor NrdR from Rhizobium etli (strain CIAT 652).